A 382-amino-acid polypeptide reads, in one-letter code: Alpha-2B adrenergic receptor (382 aa).

A helical membrane pass occupies residues 1–25 (AIAAVITFLILFTIFGNALVILAVL). The Cytoplasmic segment spans residues 26-36 (TSRSLRAPQNL). A helical transmembrane segment spans residues 37-62 (FLVSLAAADILVATLIIPFSLANELL). Over 63–72 (GYWYFRHTWC) the chain is Extracellular. C72 and C151 are oxidised to a cystine. A helical transmembrane segment spans residues 73–95 (EVYLALDVLFCTSSIVHLCAISL). The Cytoplasmic segment spans residues 96-117 (DRYWSVSRALEYNSKRTPRRIK). The helical transmembrane segment at 118 to 140 (GIILTVWLIAAFISLPPLIYKGD) threads the bilayer. Topologically, residues 141–156 (KGKKPGGRPQCKLNEE) are extracellular. A helical membrane pass occupies residues 157–180 (AWYILSSSIGSFFAPCLIMILVYL). At 181–346 (RIYLIAKRRN…MNREKRFTFV (166 aa)) the chain is on the cytoplasmic side. A disordered region spans residues 192–305 (QGPHGKQAPG…QGTPNFQPSQ (114 aa)). Positions 271–284 (EEEEEEEEEEEEEC) are enriched in acidic residues. A compositionally biased stretch (polar residues) spans 291–305 (TSSSLQGTPNFQPSQ). The chain crosses the membrane as a helical span at residues 347 to 370 (LAVVIGVFVLCWFPFFFSYSLGAI). Over 371–379 (CPQHCKVPH) the chain is Extracellular. A helical membrane pass occupies residues 380–382 (GLF).

Belongs to the G-protein coupled receptor 1 family. Adrenergic receptor subfamily. ADRA2B sub-subfamily. In terms of assembly, interacts with RAB26. Interacts with PPP1R9B. Interacts with GGA1, GGA2 and GGA3.

The protein localises to the cell membrane. Functionally, alpha-2 adrenergic receptors mediate the catecholamine-induced inhibition of adenylate cyclase through the action of G proteins. This is Alpha-2B adrenergic receptor (ADRA2B) from Didelphis virginiana (North American opossum).